The primary structure comprises 751 residues: Collagen alpha-1(XIII) chain (751 aa).

The interval 1–24 is disordered; that stretch reads MVAERTRKAAASGSRGPGELGAPG. At 1–40 the chain is on the cytoplasmic side; it reads MVAERTRKAAASGSRGPGELGAPGPGTVALAEQCARLPSP. The segment at 1–119 is nonhelical region 1 (NC1); the sequence is MVAERTRKAA…KMSPGCNCPP (119 aa). Positions 15 to 24 are enriched in gly residues; the sequence is RGPGELGAPG. A helical; Signal-anchor for type II membrane protein transmembrane segment spans residues 41 to 59; it reads GCCGLLALALCSLALSLLA. The Extracellular segment spans residues 60–751; that stretch reads HFRTAELQAR…GLPVQGCWNK (692 aa). Disordered stretches follow at residues 108–127, 190–225, and 265–449; these read APKMSPGCNCPPGPPGPTGR, PGHPGPKGEMGLVGPRGQPGPQGQKGEKGQCGEYPH, and TFQG…EMVD. Over residues 116-125 the composition is skewed to pro residues; the sequence is NCPPGPPGPT. A triple-helical region 1 (COL1) region spans residues 120–223; it reads GPPGPTGRPG…KGEKGQCGEY (104 aa). Positions 204–213 are enriched in low complexity; the sequence is PRGQPGPQGQ. Residues 214 to 225 show a composition bias toward basic and acidic residues; that stretch reads KGEKGQCGEYPH. Residues 224 to 273 form a nonhelical region 2 (NC2) region; sequence PHREYPGGMLAALRSNPIMSLKLLPLLNSVRLAPPPVIKRRTFQGEQSQT. The triple-helical region 2 (COL2) stretch occupies residues 274–445; sequence GIQGPPGPPG…KGAKGEPGKG (172 aa). Composition is skewed to pro residues over residues 278–288, 296–312, and 391–402; these read PPGPPGPPGPS, LPGPIGPPGLPGPPGPK, and PGPPGLPGPPGP. A compositionally biased stretch (low complexity) spans 403–436; sequence KGEAGVDGQAGPPGQQGDKGQPGAAGEQGPSGPK. A compositionally biased stretch (basic and acidic residues) spans 438–447; that stretch reads AKGEPGKGEM. Residues 446 to 467 form a nonhelical region 3 (NC3) region; that stretch reads EMVDYNGSINEALQEIRTLALM. N451 carries N-linked (GlcNAc...) asparagine glycosylation. A disordered region spans residues 466–751; sequence LMGPPGLPGQ…GLPVQGCWNK (286 aa). The triple-helical region 3 (COL3) stretch occupies residues 468–733; that stretch reads GPPGLPGQTG…KGDQGAPGLD (266 aa). The segment covering 470–484 has biased composition (pro residues); the sequence is PGLPGQTGPPGPPGT. Basic and acidic residues-rich tracts occupy residues 499–509, 557–568, and 586–596; these read HDGDKGPRGKP, TGEKGEPGDEGR, and EKGEAGEKGDP. A compositionally biased stretch (pro residues) spans 601–613; that stretch reads PGPPGPEGPPGPP. The segment covering 615 to 628 has biased composition (low complexity); it reads LQGFPGPKGEAGLE. Residues 630–643 show a composition bias toward basic and acidic residues; the sequence is SKGEKGSQGEKGDR. The segment covering 658-673 has biased composition (pro residues); sequence PGPPGTPGPIGVPGPA. Over residues 684 to 699 the composition is skewed to low complexity; that stretch reads DPGMTGPTGAAGLPGL. Basic and acidic residues predominate over residues 706 to 726; that stretch reads KGNRGERGKKGSRGPKGDKGD. Positions 734–751 are nonhelical region 4 (NC4); it reads APCPLGEDGLPVQGCWNK.

Homotrimer; disulfide-linked. Nucleation of the type XIII collagen triple helix is likely to occur at the N-terminal region with triple helix formation proceeding from the N- to the C-terminus. Interacts with FN1, perlecan/HSPG2 and NID2.

Its subcellular location is the cell membrane. The protein resides in the postsynaptic cell membrane. Involved in cell-matrix and cell-cell adhesion interactions that are required for normal development. May participate in the linkage between muscle fiber and basement membrane. May play a role in endochondral ossification of bone and branching morphogenesis of lung. Binds heparin. At neuromuscular junctions, may play a role in acetylcholine receptor clustering. The polypeptide is Collagen alpha-1(XIII) chain (Mus musculus (Mouse)).